The following is a 545-amino-acid chain: Glucose-6-phosphate isomerase (545 aa).

The active-site Proton donor is Glu-351. Active-site residues include His-382 and Lys-510.

It belongs to the GPI family.

Its subcellular location is the cytoplasm. It carries out the reaction alpha-D-glucose 6-phosphate = beta-D-fructose 6-phosphate. Its pathway is carbohydrate biosynthesis; gluconeogenesis. It functions in the pathway carbohydrate degradation; glycolysis; D-glyceraldehyde 3-phosphate and glycerone phosphate from D-glucose: step 2/4. Its function is as follows. Catalyzes the reversible isomerization of glucose-6-phosphate to fructose-6-phosphate. The polypeptide is Glucose-6-phosphate isomerase (Shewanella baltica (strain OS223)).